Reading from the N-terminus, the 89-residue chain is Small ribosomal subunit protein uS15 (89 aa).

This sequence belongs to the universal ribosomal protein uS15 family. As to quaternary structure, part of the 30S ribosomal subunit. Forms a bridge to the 50S subunit in the 70S ribosome, contacting the 23S rRNA.

In terms of biological role, one of the primary rRNA binding proteins, it binds directly to 16S rRNA where it helps nucleate assembly of the platform of the 30S subunit by binding and bridging several RNA helices of the 16S rRNA. Forms an intersubunit bridge (bridge B4) with the 23S rRNA of the 50S subunit in the ribosome. The chain is Small ribosomal subunit protein uS15 from Salmonella schwarzengrund (strain CVM19633).